Reading from the N-terminus, the 494-residue chain is ATP synthase subunit beta, chloroplastic (494 aa).

172 to 179 (GGAGVGKT) serves as a coordination point for ATP.

Belongs to the ATPase alpha/beta chains family. As to quaternary structure, F-type ATPases have 2 components, CF(1) - the catalytic core - and CF(0) - the membrane proton channel. CF(1) has five subunits: alpha(3), beta(3), gamma(1), delta(1), epsilon(1). CF(0) has four main subunits: a(1), b(1), b'(1) and c(9-12).

It localises to the plastid. It is found in the chloroplast thylakoid membrane. It carries out the reaction ATP + H2O + 4 H(+)(in) = ADP + phosphate + 5 H(+)(out). In terms of biological role, produces ATP from ADP in the presence of a proton gradient across the membrane. The catalytic sites are hosted primarily by the beta subunits. The polypeptide is ATP synthase subunit beta, chloroplastic (Physcomitrium patens (Spreading-leaved earth moss)).